Consider the following 276-residue polypeptide: NADPH-dependent 7-cyano-7-deazaguanine reductase (276 aa).

Residue 83 to 85 (IES) coordinates substrate. 85 to 86 (SK) serves as a coordination point for NADPH. The Thioimide intermediate role is filled by cysteine 184. The Proton donor role is filled by aspartate 191. 223–224 (HE) lines the substrate pocket. 252 to 253 (RG) lines the NADPH pocket.

It belongs to the GTP cyclohydrolase I family. QueF type 2 subfamily. Homodimer.

Its subcellular location is the cytoplasm. It carries out the reaction 7-aminomethyl-7-carbaguanine + 2 NADP(+) = 7-cyano-7-deazaguanine + 2 NADPH + 3 H(+). It functions in the pathway tRNA modification; tRNA-queuosine biosynthesis. Its function is as follows. Catalyzes the NADPH-dependent reduction of 7-cyano-7-deazaguanine (preQ0) to 7-aminomethyl-7-deazaguanine (preQ1). This is NADPH-dependent 7-cyano-7-deazaguanine reductase from Pseudomonas fluorescens (strain SBW25).